Here is a 275-residue protein sequence, read N- to C-terminus: Protein unc-50 homolog (275 aa).

Polar residues predominate over residues 1–26; that stretch reads MTQYSHVKYTQSPTPSVVSGYSSASR. The segment at 1–39 is disordered; that stretch reads MTQYSHVKYTQSPTPSVVSGYSSASRLHSPLPPPANHRR. Over 1–99 the chain is Cytoplasmic; the sequence is MTQYSHVKYT…TKSQFARDDP (99 aa). A helical membrane pass occupies residues 100–120; the sequence is AFLVLLVVCLCVTSLGFAYVL. Residues 121 to 129 lie on the Lumenal side of the membrane; the sequence is GLSFWQSIS. Residues 130 to 150 traverse the membrane as a helical segment; that stretch reads FIFYVVFVDCIFVGIIIASFF. Residues 151 to 178 are Cytoplasmic-facing; the sequence is WAVTNRYLRTNSLEPDIEWGYAFDVHLN. Residues 179-199 form a helical membrane-spanning segment; sequence AFFPPLMLLHFIQLFFYNWLI. The Lumenal portion of the chain corresponds to 200–207; that stretch reads SQTWFISR. The helical transmembrane segment at 208–228 threads the bilayer; the sequence is FLGNTFWLMGMGYYVYITFLG. The Cytoplasmic portion of the chain corresponds to 229–239; it reads YNCIPHLKNTR. Residues 240–260 traverse the membrane as a helical segment; that stretch reads IILIALPIIFLLFLVVTIIGW. The Lumenal segment spans residues 261-275; the sequence is NATISFVNFYKYRVY.

This sequence belongs to the unc-50 family.

It localises to the golgi apparatus membrane. Functionally, required for cell surface expression of acetylcholine receptors. This chain is Protein unc-50 homolog, found in Drosophila melanogaster (Fruit fly).